Here is a 151-residue protein sequence, read N- to C-terminus: Large ribosomal subunit protein uL15 (151 aa).

A disordered region spans residues 1 to 51 (MPLKIEDLKPTPGSRKPKKRLGRGIGSGLGKTAGKGHKGEKARGRGKIGRT). The span at 23-33 (RGIGSGLGKTA) shows a compositional bias: gly residues.

The protein belongs to the universal ribosomal protein uL15 family. In terms of assembly, part of the 50S ribosomal subunit.

Its function is as follows. Binds to the 23S rRNA. This is Large ribosomal subunit protein uL15 from Petrotoga mobilis (strain DSM 10674 / SJ95).